The primary structure comprises 496 residues: UDP-N-acetylmuramoylalanine--D-glutamate ligase (496 aa).

Residue 130–136 (GTNGKTT) coordinates ATP.

Belongs to the MurCDEF family. As to quaternary structure, interacts with PknA. In terms of processing, phosphorylated by PknA.

It localises to the cytoplasm. The catalysed reaction is UDP-N-acetyl-alpha-D-muramoyl-L-alanine + D-glutamate + ATP = UDP-N-acetyl-alpha-D-muramoyl-L-alanyl-D-glutamate + ADP + phosphate + H(+). It functions in the pathway cell wall biogenesis; peptidoglycan biosynthesis. Cell wall formation. Catalyzes the addition of glutamate to the nucleotide precursor UDP-N-acetylmuramoyl-L-alanine (UMA). The polypeptide is UDP-N-acetylmuramoylalanine--D-glutamate ligase (Mycobacterium tuberculosis (strain ATCC 25177 / H37Ra)).